A 451-amino-acid chain; its full sequence is Scaffold protein ILK (451 aa).

M1 is subject to N-acetylmethionine. ANK repeat units follow at residues 2–30, 31–63, 64–96, 97–129, and 130–174; these read DDIFTQCREGNAVAVRLWLDNTENDLNQG, DDHGFSPLHWACREGRSAVVEMLIMRGARINVM, NRGDDTPLHLAASHGHRDIVQKLLQYKADINAV, NEHGNVPLHYACFWGQDQVAEDLVANGALVSIC, and NKYG…GTTR. The interval 33 to 139 is interaction with LIMS1; the sequence is HGFSPLHWAC…NKYGEMPMDK (107 aa). A Phosphothreonine modification is found at T173. A PH-like; mediates interaction with TGFB1I1 region spans residues 180–212; sequence GTLNKHSGIDFKQLNFLAKLNENHSGELWKGRW. S186 carries the post-translational modification Phosphoserine. Positions 193–445 constitute a Protein kinase domain; sequence LNFLAKLNEN…PKFDMIVPIL (253 aa). The ATP site is built by N200, N202, H203, and S204. S246 carries the post-translational modification Phosphoserine. 3 residues coordinate ATP: H270, M272, and N279. Residue D339 participates in Mg(2+) binding. An ATP-binding site is contributed by K341. The Nuclear localization signal signature appears at 363 to 371; it reads KKPEDTNRR. At K425 the chain carries N6-acetyllysine.

Belongs to the protein kinase superfamily. TKL Ser/Thr protein kinase family. Component of the heterotrimeric IPP (ILK-PINCH-PARVIN) complex composed of ILK, LIMS1/PINCH and PARVA; the complex binds to F-actin via the C-terminal tail of LIMS1 and the N-terminal region of PARVA, promoting F-actin filament bundling. Formation of the IPP complex is dependent on protein kinase C and precedes integrin-mediated cell adhesion and spreading. ILK also interacts with LIMS2/PINCH2 and with PARVB and PARVG which may substitute for LIMS1 and PARVA in the IPP complex; PARVA and PARVB compete for the same binding site. Interaction with PARVG promotes the establishment of cell polarity required for leukocyte migration. Interacts with the cytoplasmic domain of integrin ITGB1 and may also interact with integrins ITGB2, ITGB3 and/or ITGB5. Interacts probably also with TGFB1I1. Interacts (via ANK repeats) with EPHA1 (via SAM domain); stimulated by EFNA1 but independent of the kinase activity of EPHA1. Interacts with FERMT2. Interacts with LIMD2; leading to activate the protein kinase activity. Interacts with PXN/PAXILLIN (via LD motif 4). Interacts with CCDC25 (via cytoplasmic region); initiating the ILK-PARVB cascade to induce cytoskeleton rearrangement and directional migration of cells. Interacts with IQGAP1; the interaction is required for localization of IQGAP1 to the cell cortex. Phosphorylation by PAK1 modulates ILK subcellular location by promoting its nuclear export.

It is found in the cell junction. It localises to the focal adhesion. Its subcellular location is the cell membrane. The protein localises to the cell projection. The protein resides in the lamellipodium. It is found in the cytoplasm. It localises to the myofibril. Its subcellular location is the sarcomere. The protein localises to the nucleus. The protein resides in the cytoskeleton. It is found in the microtubule organizing center. It localises to the centrosome. Its subcellular location is the cell cortex. In terms of biological role, scaffold protein which mediates protein-protein interactions during a range of cellular events including focal adhesion assembly, cell adhesion and cell migration. Regulates integrin-mediated signal transduction by contributing to inside-out integrin activation. Recruits PARVA and LIMS1/PITCH to form the heterotrimeric IPP (ILK-PINCH-PARVIN) complex which binds to F-actin via the C-terminal tail of LIMS1 and the N-terminal region of PARVA, promoting F-actin filament bundling, a process required to generate force for actin cytoskeleton reorganization and subsequent dynamic cell adhesion events such as cell spreading and migration. Binding to PARVA promotes effective assembly of ILK into focal adhesions while PARVA-bound ILK can simultaneously engage integrin-beta cytoplasmic tails to mediate cell adhesion. Plays a role with PARVG in promoting the cell adhesion and spreading of leukocytes. Acts as an upstream effector of both AKT1/PKB and GSK3. Mediates trafficking of caveolae to the cell surface in an ITGB1-dependent manner by promoting the recruitment of IQGAP1 to the cell cortex which cooperates with its effector DIAPH1 to locally stabilize microtubules and allow stable insertion of caveolae into the plasma membrane. Required for the maintenance of mitotic spindle integrity by promoting phosphorylation of TACC3 by AURKA. Associates with chromatin and may act as a negative regulator of transcription when located in the nucleus. This is Scaffold protein ILK from Cavia porcellus (Guinea pig).